The chain runs to 350 residues: Mannonate dehydratase (350 aa).

This sequence belongs to the mannonate dehydratase family. The cofactor is Fe(2+). It depends on Mn(2+) as a cofactor.

It carries out the reaction D-mannonate = 2-dehydro-3-deoxy-D-gluconate + H2O. It participates in carbohydrate metabolism; pentose and glucuronate interconversion. Functionally, catalyzes the dehydration of D-mannonate. The sequence is that of Mannonate dehydratase from Clostridium perfringens (strain 13 / Type A).